The sequence spans 349 residues: Aspartate carbamoyltransferase catalytic subunit (349 aa).

Residues Arg59 and Thr60 each coordinate carbamoyl phosphate. Lys87 is a binding site for L-aspartate. Residues Arg109, His142, and Gln145 each coordinate carbamoyl phosphate. L-aspartate contacts are provided by Arg182 and Arg253. 2 residues coordinate carbamoyl phosphate: Gly294 and Pro295.

It belongs to the aspartate/ornithine carbamoyltransferase superfamily. ATCase family. As to quaternary structure, heterododecamer (2C3:3R2) of six catalytic PyrB chains organized as two trimers (C3), and six regulatory PyrI chains organized as three dimers (R2).

The catalysed reaction is carbamoyl phosphate + L-aspartate = N-carbamoyl-L-aspartate + phosphate + H(+). The protein operates within pyrimidine metabolism; UMP biosynthesis via de novo pathway; (S)-dihydroorotate from bicarbonate: step 2/3. In terms of biological role, catalyzes the condensation of carbamoyl phosphate and aspartate to form carbamoyl aspartate and inorganic phosphate, the committed step in the de novo pyrimidine nucleotide biosynthesis pathway. This chain is Aspartate carbamoyltransferase catalytic subunit, found in Synechococcus sp. (strain CC9311).